The following is a 489-amino-acid chain: Ribonuclease G (489 aa).

The S1 motif domain maps to 39–128; it reads GNIYKGRVSR…LTTDITLPSR (90 aa). Residues Asp-304 and Asp-347 each coordinate Mg(2+).

This sequence belongs to the RNase E/G family. RNase G subfamily. In terms of assembly, homodimer, in equilibrium with possible higher multimers. Mg(2+) is required as a cofactor.

It localises to the cytoplasm. In terms of biological role, an endonuclease that acts in the processing of the 5'-end of 16S rRNA and 23S rRNA. It prefers 5'-monophosphorylated substrates and cleaves single-stranded sites rich in A and U residues; contributes to tRNA processing and mRNA turnover. The polypeptide is Ribonuclease G (rng) (Escherichia coli O157:H7).